A 397-amino-acid chain; its full sequence is Cathepsin E (397 aa).

Positions 1–20 are cleaved as a signal peptide; the sequence is MKPLLVLLLLLLLDLAQAQG. Positions 21–59 are cleaved as a propeptide — activation peptide; that stretch reads ALHRVPLRRHQSLRKKLRAQGQLSEFWRSHNLDMTRLSE. Residues 79–393 form the Peptidase A1 domain; the sequence is YFGTISIGTP…DRGNNQVGLA (315 aa). Asn-91 carries N-linked (GlcNAc...) asparagine glycosylation. The active site involves Asp-97. Disulfide bonds link Cys-110–Cys-115 and Cys-273–Cys-277. Asp-282 is an active-site residue. The N-linked (GlcNAc...) asparagine glycan is linked to Asn-323.

It belongs to the peptidase A1 family. In terms of assembly, homodimer; disulfide-linked. Glycosylated. The nature of the carbohydrate chain varies between cell types. In fibroblasts, the proenzyme contains a high mannose-type oligosaccharide, while the mature enzyme contains a complex-type oligosaccharide. As to expression, expressed abundantly in the stomach, club cells and alveolar macrophages of the lung, brain microglia, spleen and activated B-lymphocytes. Not expressed in resting B-lymphocytes.

The protein resides in the endosome. The enzyme catalyses Similar to cathepsin D, but slightly broader specificity.. May have a role in immune function. Probably involved in the processing of antigenic peptides during MHC class II-mediated antigen presentation. May play a role in activation-induced lymphocyte depletion in the thymus, and in neuronal degeneration and glial cell activation in the brain. In Mus musculus (Mouse), this protein is Cathepsin E (Ctse).